A 601-amino-acid polypeptide reads, in one-letter code: MAASADLSKSSPTPNGIPSSDPASDAMDPFHACSILKQLKTMYDEGQLTDIVVEVDHGKTFSCHRNVLAAISPYFRSMFTSGLTESTQKEVRIVGVEAESMDLVLNYAYTSRVILTEANVQALFTAASIFQIPSIQDQCAKYMISHLDPQNSIGVFIFADHYGHQELGDRSKEYIRKKFLCVTKEQEFLQLTKDQLISILDSDDLNVDREEHVYESIIRWFEHEQNEREVHLPEIFAKCIRFPLMEDTFIEKIPPQFAQAIAKSCVEKGPSNTNGCTQRLGMTASEMIICFDAAHKHSGKKQTVPCLDIVTGRVFKLCKPPNDLREVGILVSPDNDIYIAGGYRPSSSEVSIDHKAENDFWMYDHSTNRWLSKPSLLRARIGCKLVYCCGKMYAIGGRVYEGDGRNSLKSVECYDSRENCWTTVCAMPVAMEFHNAVEYKEKIYVLQGEFFLFYEPQKDYWGFLTPMTVPRIQGLAAVYKDSIYYIAGTCGNHQRMFTVEAYDIELNKWTRKKDFPCDQSINPYLKLVLFQNKLHLFVRATQVTVEEHVFRTSRKNSLYQYDDIADQWMKVYETPDRLWDLGRHFECAVAKLYPQCLQKVL.

Residues 1–25 are disordered; that stretch reads MAASADLSKSSPTPNGIPSSDPASD. Over residues 7-22 the composition is skewed to polar residues; that stretch reads LSKSSPTPNGIPSSDP. The BTB domain occupies 49-117; sequence TDIVVEVDHG…AYTSRVILTE (69 aa). A BACK domain is found at 153 to 252; sequence IGVFIFADHY…PLMEDTFIEK (100 aa). Kelch repeat units follow at residues 336 to 390, 391 to 441, 443 to 481, 483 to 532, and 542 to 588; these read DIYI…YCCG, KMYA…EYKE, IYVL…VYKD, IYYI…LFQN, and QVTV…FECA.

It belongs to the KBTBD8 family. In terms of assembly, component of the BCR(KBTBD8) E3 ubiquitin ligase complex, at least composed of CUL3, KBTBD8 and RBX1.

The protein resides in the cytoplasm. It localises to the cytoskeleton. It is found in the spindle. Its subcellular location is the golgi apparatus. Its function is as follows. Substrate-specific adapter of a BCR (BTB-CUL3-RBX1) E3 ubiquitin ligase complex that acts as a regulator of neural crest specification. The BCR(KBTBD8) complex acts by mediating monoubiquitination of NOLC1 and TCOF1: monoubiquitination promotes the formation of a NOLC1-TCOF1 complex that acts as a platform to connect RNA polymerase I with enzymes responsible for ribosomal processing and modification, leading to remodel the translational program of differentiating cells in favor of neural crest specification. This Homo sapiens (Human) protein is Kelch repeat and BTB domain-containing protein 8 (KBTBD8).